A 151-amino-acid chain; its full sequence is SsrA-binding protein (151 aa).

It belongs to the SmpB family.

The protein localises to the cytoplasm. Functionally, required for rescue of stalled ribosomes mediated by trans-translation. Binds to transfer-messenger RNA (tmRNA), required for stable association of tmRNA with ribosomes. tmRNA and SmpB together mimic tRNA shape, replacing the anticodon stem-loop with SmpB. tmRNA is encoded by the ssrA gene; the 2 termini fold to resemble tRNA(Ala) and it encodes a 'tag peptide', a short internal open reading frame. During trans-translation Ala-aminoacylated tmRNA acts like a tRNA, entering the A-site of stalled ribosomes, displacing the stalled mRNA. The ribosome then switches to translate the ORF on the tmRNA; the nascent peptide is terminated with the 'tag peptide' encoded by the tmRNA and targeted for degradation. The ribosome is freed to recommence translation, which seems to be the essential function of trans-translation. The chain is SsrA-binding protein from Geotalea uraniireducens (strain Rf4) (Geobacter uraniireducens).